The following is a 169-amino-acid chain: NADH-quinone oxidoreductase subunit B (169 aa).

The [4Fe-4S] cluster site is built by cysteine 42, cysteine 43, cysteine 107, and cysteine 136.

The protein belongs to the complex I 20 kDa subunit family. NDH-1 is composed of 14 different subunits. Subunits NuoB, C, D, E, F, and G constitute the peripheral sector of the complex. Requires [4Fe-4S] cluster as cofactor.

It is found in the cell inner membrane. It catalyses the reaction a quinone + NADH + 5 H(+)(in) = a quinol + NAD(+) + 4 H(+)(out). In terms of biological role, NDH-1 shuttles electrons from NADH, via FMN and iron-sulfur (Fe-S) centers, to quinones in the respiratory chain. The immediate electron acceptor for the enzyme in this species is believed to be ubiquinone. Couples the redox reaction to proton translocation (for every two electrons transferred, four hydrogen ions are translocated across the cytoplasmic membrane), and thus conserves the redox energy in a proton gradient. The chain is NADH-quinone oxidoreductase subunit B from Nitratiruptor sp. (strain SB155-2).